A 542-amino-acid chain; its full sequence is ATP synthase subunit alpha (542 aa).

ATP is bound at residue G176–T183.

This sequence belongs to the ATPase alpha/beta chains family. F-type ATPases have 2 components, CF(1) - the catalytic core - and CF(0) - the membrane proton channel. CF(1) has five subunits: alpha(3), beta(3), gamma(1), delta(1), epsilon(1). CF(0) has three main subunits: a(1), b(2) and c(9-12). The alpha and beta chains form an alternating ring which encloses part of the gamma chain. CF(1) is attached to CF(0) by a central stalk formed by the gamma and epsilon chains, while a peripheral stalk is formed by the delta and b chains.

It is found in the cell membrane. The enzyme catalyses ATP + H2O + 4 H(+)(in) = ADP + phosphate + 5 H(+)(out). Functionally, produces ATP from ADP in the presence of a proton gradient across the membrane. The alpha chain is a regulatory subunit. This Tropheryma whipplei (strain TW08/27) (Whipple's bacillus) protein is ATP synthase subunit alpha.